A 199-amino-acid polypeptide reads, in one-letter code: Phosphoheptose isomerase (199 aa).

Positions 36–198 constitute an SIS domain; that stretch reads MAQCLLNEHK…DRKLIPSSED (163 aa). 51–53 serves as a coordination point for substrate; sequence NGG. 2 residues coordinate Zn(2+): histidine 60 and glutamate 64. Substrate is bound by residues glutamate 64, 93–94, 119–121, serine 124, and glutamine 174; these read ND and STS. 2 residues coordinate Zn(2+): glutamine 174 and histidine 182.

The protein belongs to the SIS family. GmhA subfamily. As to quaternary structure, homotetramer. Zn(2+) is required as a cofactor.

Its subcellular location is the cytoplasm. It carries out the reaction 2 D-sedoheptulose 7-phosphate = D-glycero-alpha-D-manno-heptose 7-phosphate + D-glycero-beta-D-manno-heptose 7-phosphate. Its pathway is carbohydrate biosynthesis; D-glycero-D-manno-heptose 7-phosphate biosynthesis; D-glycero-alpha-D-manno-heptose 7-phosphate and D-glycero-beta-D-manno-heptose 7-phosphate from sedoheptulose 7-phosphate: step 1/1. In terms of biological role, catalyzes the isomerization of sedoheptulose 7-phosphate in D-glycero-D-manno-heptose 7-phosphate. The polypeptide is Phosphoheptose isomerase (Coxiella burnetii (strain CbuK_Q154) (Coxiella burnetii (strain Q154))).